The chain runs to 409 residues: Multifunctional CCA protein (409 aa).

ATP is bound by residues Gly-8 and Arg-11. Positions 8 and 11 each coordinate CTP. Residues Asp-21 and Asp-23 each contribute to the Mg(2+) site. The ATP site is built by Arg-91, Arg-137, and Arg-140. Residues Arg-91, Arg-137, and Arg-140 each contribute to the CTP site. Residues 228-329 (TGVHVLSVLE…LELLQSFDVY (102 aa)) form the HD domain.

This sequence belongs to the tRNA nucleotidyltransferase/poly(A) polymerase family. Bacterial CCA-adding enzyme type 1 subfamily. In terms of assembly, monomer. Can also form homodimers and oligomers. It depends on Mg(2+) as a cofactor. Ni(2+) serves as cofactor.

It catalyses the reaction a tRNA precursor + 2 CTP + ATP = a tRNA with a 3' CCA end + 3 diphosphate. The catalysed reaction is a tRNA with a 3' CCA end + 2 CTP + ATP = a tRNA with a 3' CCACCA end + 3 diphosphate. Its function is as follows. Catalyzes the addition and repair of the essential 3'-terminal CCA sequence in tRNAs without using a nucleic acid template. Adds these three nucleotides in the order of C, C, and A to the tRNA nucleotide-73, using CTP and ATP as substrates and producing inorganic pyrophosphate. tRNA 3'-terminal CCA addition is required both for tRNA processing and repair. Also involved in tRNA surveillance by mediating tandem CCA addition to generate a CCACCA at the 3' terminus of unstable tRNAs. While stable tRNAs receive only 3'-terminal CCA, unstable tRNAs are marked with CCACCA and rapidly degraded. The chain is Multifunctional CCA protein from Pseudomonas savastanoi pv. phaseolicola (strain 1448A / Race 6) (Pseudomonas syringae pv. phaseolicola (strain 1448A / Race 6)).